Here is an 852-residue protein sequence, read N- to C-terminus: Metastasis-associated in colon cancer protein 1 (852 aa).

Position 19 is a phosphoserine (Ser-19). One can recognise a ZU5 domain in the interval 212–349; the sequence is VTIACKVNHQ…LSQVMYLVVA (138 aa). The SH3 domain maps to 549–619; sequence NFSNYGVTLK…HCKNVKVISK (71 aa).

Interacts with FASLG. Preferentially expressed in metastasizing tumors.

The protein localises to the cytoplasm. It localises to the nucleus. In terms of biological role, acts as a transcription activator for MET and as a key regulator of HGF-MET signaling. Promotes cell motility, proliferation and hepatocyte growth factor (HGF)-dependent scattering in vitro and tumor growth and metastasis in vivo. In Homo sapiens (Human), this protein is Metastasis-associated in colon cancer protein 1 (MACC1).